The chain runs to 202 residues: MSALVPPVLLASSSPSRGRLLSEAGVPFTAAAPGVDEQAIKASLKAEGVSARDAAIHLGEWKARRLSLAHPQALVIGGDQIAAIDDLWLDKPGSLATARQHLLLLRGRTHVLETAVVVLRDGQRLWHHLARPKMTMRSFSDAFLEDYLDRAGAGITACAGAYQIEGLGLQLFAAIEGDLFSIQGLPLLPLLDFLRPHGVLLS.

The Proton acceptor role is filled by D79.

This sequence belongs to the Maf family. Requires a divalent metal cation as cofactor.

The protein localises to the cytoplasm. The catalysed reaction is a ribonucleoside 5'-triphosphate + H2O = a ribonucleoside 5'-phosphate + diphosphate + H(+). It carries out the reaction a 2'-deoxyribonucleoside 5'-triphosphate + H2O = a 2'-deoxyribonucleoside 5'-phosphate + diphosphate + H(+). Nucleoside triphosphate pyrophosphatase. May have a dual role in cell division arrest and in preventing the incorporation of modified nucleotides into cellular nucleic acids. The sequence is that of Nucleoside triphosphate pyrophosphatase from Rhodospirillum rubrum (strain ATCC 11170 / ATH 1.1.1 / DSM 467 / LMG 4362 / NCIMB 8255 / S1).